The primary structure comprises 804 residues: MSKLSFRARALDATKPLPIFRGNDMPDLNDCVSINRAVPQMPTGMEKEEESEHHLQRAISAQQVFREKKECMVIPVPEAESNVHYYSRLYKGEFKQPKQFIHITPFNLDYEQPDYDMDSEDETLLNRLNRKMEIKPLQFEIMIDRLEKASSNQLVSLQEAKLLLNEDDYLIKSVYDYWVRKRKNCRGPCLIPQVKQEKRDGSTNNDPYVAFRRRTEKMQTRKNRKNDEASYEKMLKLRREFSRAITILEMIKRREKTKRELLHLTLEVVEKRYNLGDFGGEILNEIKIPKADKEIYAIPPSLHNGNHHKVPECKVKNTHHLNVKDEVLEIVRLKKKYPKKPKADILVTPLPQANSEPLAVINRSDIKQYDFQSSDDDEFPQVPSPLSELEEENDPDGSYAFRRRAGCQYYAPHLDQMNDTPETTDLSGLARHRNRHCLTTLTVPRRCIGFARKRLGRGGRVIMDRLSTEHDSVLKQIDPEMLSGFSSSSHIAQPPSSPSRTNASDRHCENRLSLPEILSNIKSCRLQCFQPRLLHTQDSDREECTSRLGQAVNLKRVSSSLLNTSKNGITVTGGITEEQFQTHQQQLVQMQKQQLAQLQQKQQSQQSLQQSHPKAQGSGSSDCMSKTLDSASALFAASAVVNSPAPVRSEVNKDQNAGHSNLNGVVQPSGTAKTLYSTNMALSSSPGISTVQLVRTVGHPTTNHLIPTLCTSNPQTLTMGNSCLANTVHLNNVSVVSPVNVHLNTRTSAPSPTALKLATVAASMDRVPKVTPSSAMSSIARENHEPERLGLNGITDTTVAMEVT.

Disordered stretches follow at residues 372–395 (QSSD…ENDP), 484–508 (GFSS…DRHC), 603–624 (QSQQ…SDCM), and 646–669 (PVRS…VQPS). Composition is skewed to polar residues over residues 611-624 (SHPK…SDCM) and 654-669 (DQNA…VQPS).

It belongs to the enhancer of polycomb family.

The protein localises to the nucleus. Its function is as follows. May play a role in transcription or DNA repair. The protein is Enhancer of polycomb homolog 2 (epc2) of Xenopus laevis (African clawed frog).